Reading from the N-terminus, the 214-residue chain is ATP phosphoribosyltransferase (214 aa).

The protein belongs to the ATP phosphoribosyltransferase family. Short subfamily. Heteromultimer composed of HisG and HisZ subunits.

It is found in the cytoplasm. It carries out the reaction 1-(5-phospho-beta-D-ribosyl)-ATP + diphosphate = 5-phospho-alpha-D-ribose 1-diphosphate + ATP. The protein operates within amino-acid biosynthesis; L-histidine biosynthesis; L-histidine from 5-phospho-alpha-D-ribose 1-diphosphate: step 1/9. Functionally, catalyzes the condensation of ATP and 5-phosphoribose 1-diphosphate to form N'-(5'-phosphoribosyl)-ATP (PR-ATP). Has a crucial role in the pathway because the rate of histidine biosynthesis seems to be controlled primarily by regulation of HisG enzymatic activity. This chain is ATP phosphoribosyltransferase (hisG), found in Aquifex aeolicus (strain VF5).